A 534-amino-acid chain; its full sequence is ATP synthase subunit beta 2 (534 aa).

A compositionally biased stretch (polar residues) spans 1–10 (MADPQATNGT). The segment at 1–30 (MADPQATNGTGAACAERDASDVGDVSDVGD) is disordered. Residue 185 to 192 (GGAGVGKT) participates in ATP binding. Residues 494-505 (AAAREADARREA) show a composition bias toward basic and acidic residues. Residues 494–534 (AAAREADARREAAAAASGAGPGTTSDPASGSAEPQGARHGR) are disordered.

It belongs to the ATPase alpha/beta chains family. F-type ATPases have 2 components, CF(1) - the catalytic core - and CF(0) - the membrane proton channel. CF(1) has five subunits: alpha(3), beta(3), gamma(1), delta(1), epsilon(1). CF(0) has three main subunits: a(1), b(2) and c(9-12). The alpha and beta chains form an alternating ring which encloses part of the gamma chain. CF(1) is attached to CF(0) by a central stalk formed by the gamma and epsilon chains, while a peripheral stalk is formed by the delta and b chains.

Its subcellular location is the cell inner membrane. It carries out the reaction ATP + H2O + 4 H(+)(in) = ADP + phosphate + 5 H(+)(out). Its function is as follows. Produces ATP from ADP in the presence of a proton gradient across the membrane. The catalytic sites are hosted primarily by the beta subunits. The polypeptide is ATP synthase subunit beta 2 (Burkholderia pseudomallei (strain 668)).